The primary structure comprises 309 residues: Nudix hydrolase 14, chloroplastic (309 aa).

The N-terminal 60 residues, 1 to 60 (MAGFTLLPSRLLAFPSRALPRRLHHHHAKLILRCKMSSSSSSLTQSITLPSQPNEPVLVS), are a transit peptide targeting the chloroplast. Positions 139–292 (ARGPAVAVLI…KVLMSIGLYE (154 aa)) constitute a Nudix hydrolase domain. The Nudix box signature appears at 179–200 (MLDDDKGDFVGTAVREVEEEIG). 2 residues coordinate Mg(2+): glutamate 194 and glutamate 198.

The protein belongs to the Nudix hydrolase family. In terms of assembly, homodimer. Requires Mg(2+) as cofactor. The cofactor is Mn(2+). As to expression, expressed in roots, leaves, stems and inflorescences.

The protein localises to the plastid. It localises to the chloroplast. The enzyme catalyses ADP-sugar + H2O = AMP + alpha-D-aldose 1-phosphate.. Functionally, mediates the hydrolysis of some nucleoside diphosphate derivatives. Can use ADP-glucose, ADP-mannose and ADP-ribose as substrates. Regulates the intracellular ADP-glucose levels linked to starch biosynthesis. The sequence is that of Nudix hydrolase 14, chloroplastic (NUDT14) from Arabidopsis thaliana (Mouse-ear cress).